We begin with the raw amino-acid sequence, 361 residues long: Pyruvate dehydrogenase E1 component subunit beta, mitochondrial (361 aa).

The N-terminal 27 residues, 1–27 (MAVNGCMRLLRNGLTSACALEQSVRRL), are a transit peptide targeting the mitochondrion. Glu-90 is a binding site for thiamine diphosphate. Residues Ile-143, Ala-191, Val-192, Asp-194, and Asn-196 each contribute to the K(+) site.

As to quaternary structure, heterotetramer of two PDHA1 and two PDHB subunits. The heterotetramer interacts with DLAT, and is part of the multimeric pyruvate dehydrogenase complex that contains multiple copies of pyruvate dehydrogenase (E1), dihydrolipoamide acetyltransferase (DLAT, E2) and lipoamide dehydrogenase (DLD, E3). Requires thiamine diphosphate as cofactor.

Its subcellular location is the mitochondrion matrix. The catalysed reaction is N(6)-[(R)-lipoyl]-L-lysyl-[protein] + pyruvate + H(+) = N(6)-[(R)-S(8)-acetyldihydrolipoyl]-L-lysyl-[protein] + CO2. In terms of biological role, the pyruvate dehydrogenase complex catalyzes the overall conversion of pyruvate to acetyl-CoA and CO(2), and thereby links the glycolytic pathway to the tricarboxylic cycle. The protein is Pyruvate dehydrogenase E1 component subunit beta, mitochondrial of Ascaris suum (Pig roundworm).